A 57-amino-acid polypeptide reads, in one-letter code: uncharacterized protein (57 aa).

The tract at residues 1–57 is disordered; sequence MANHRGGSGNFAEDRERASEAGKKGGQHSGGNFKNDPQRASEAGKKGGKSSHGKSDN. Basic and acidic residues-rich tracts occupy residues 12-23 and 36-45; these read AEDRERASEAGK and DPQRASEAGK. Positions 46–57 are enriched in basic residues; it reads KGGKSSHGKSDN.

Belongs to the con-10 family.

This is an uncharacterized protein from Escherichia coli (strain K12).